The chain runs to 357 residues: Cinnamyl alcohol dehydrogenase 5 (357 aa).

A Zn(2+)-binding site is contributed by Cys47. Thr49 lines the NADP(+) pocket. Zn(2+)-binding residues include His69, Glu70, Cys100, Cys103, Cys106, Cys114, and Cys163. Residues Thr167, 188-193, 211-216, Thr251, Gly275, and 298-300 contribute to the NADP(+) site; these read GLGGVG, SSSNKK, and SFI.

This sequence belongs to the zinc-containing alcohol dehydrogenase family. In terms of assembly, homodimer. Zn(2+) serves as cofactor. As to expression, expressed at the lateral root initiation sites, in the vascular tissues of the primary lateral root and the root caps. Expressed in the hypocotyl, cotyledon and leaf veins, apical meristem region, at the base of the trichomes, hydathodes and cauline leaves. In stems, expressed in the cells associated with the vascular cambium, interfascicular cambium and the developing xylem. Expressed in the vascular strand of petals and sepals, anthers, stamen filaments, stigma in flowers, and abscission, style and stigmatic regions of siliques.

It carries out the reaction (E)-cinnamyl alcohol + NADP(+) = (E)-cinnamaldehyde + NADPH + H(+). The catalysed reaction is (E)-coniferol + NADP(+) = (E)-coniferaldehyde + NADPH + H(+). The enzyme catalyses (E)-sinapyl alcohol + NADP(+) = (E)-sinapaldehyde + NADPH + H(+). It catalyses the reaction (E)-4-coumaroyl alcohol + NADP(+) = (E)-4-coumaraldehyde + NADPH + H(+). It carries out the reaction (E)-caffeyl alcohol + NADP(+) = (E)-caffeyl aldehyde + NADPH + H(+). The protein operates within aromatic compound metabolism; phenylpropanoid biosynthesis. In terms of biological role, involved in lignin biosynthesis in the floral stem. Catalyzes the final step specific for the production of lignin monomers. Catalyzes the NADPH-dependent reduction of coniferaldehyde, 5-hydroxyconiferaldehyde, sinapaldehyde, 4-coumaraldehyde and caffeyl aldehyde to their respective alcohols. This Arabidopsis thaliana (Mouse-ear cress) protein is Cinnamyl alcohol dehydrogenase 5.